The chain runs to 129 residues: Small ribosomal subunit protein uS8 (129 aa).

The protein belongs to the universal ribosomal protein uS8 family. As to quaternary structure, part of the 30S ribosomal subunit.

Functionally, one of the primary rRNA binding proteins, it binds directly to 16S rRNA central domain where it helps coordinate assembly of the platform of the 30S subunit. The polypeptide is Small ribosomal subunit protein uS8 (Archaeoglobus fulgidus (strain ATCC 49558 / DSM 4304 / JCM 9628 / NBRC 100126 / VC-16)).